Here is a 371-residue protein sequence, read N- to C-terminus: Cytochrome b (371 aa).

Helical transmembrane passes span 25–45, 69–90, 105–125, and 170–190; these read FGSMLLTCLMLQVLTGFFLAI, WIMQNTHAIGASLFFICIYIHI, WLSGVTLLMTLMATAFFGYVL, and FFALHFILPFIIISLSSIHII. Heme b is bound by residues His-75 and His-89. Positions 174 and 188 each coordinate heme b. His-193 contributes to the a ubiquinone binding site. 4 helical membrane passes run 218-238, 280-300, 312-332, and 339-358; these read YKDLMTTTSMIILLFIILSFS, LGGTLALLMSILILTLPPFTH, LSQTLFWTLIATFVMITWTAT, and FITISQLTSIFYFSFFIMNP.

It belongs to the cytochrome b family. In terms of assembly, the cytochrome bc1 complex contains 3 respiratory subunits (MT-CYB, CYC1 and UQCRFS1), 2 core proteins (UQCRC1 and UQCRC2) and probably 6 low-molecular weight proteins. It depends on heme b as a cofactor.

It is found in the mitochondrion inner membrane. Component of the ubiquinol-cytochrome c reductase complex (complex III or cytochrome b-c1 complex) that is part of the mitochondrial respiratory chain. The b-c1 complex mediates electron transfer from ubiquinol to cytochrome c. Contributes to the generation of a proton gradient across the mitochondrial membrane that is then used for ATP synthesis. This is Cytochrome b (MT-CYB) from Micrurus fulvius (Eastern coral snake).